Here is a 31-residue protein sequence, read N- to C-terminus: U6-ctenitoxin-Co1a (31 aa).

2 disulfide bridges follow: Cys-2–Cys-18 and Cys-9–Cys-23.

As to expression, expressed by the venom gland.

The protein localises to the secreted. Its function is as follows. Antagonist of L-type calcium channels (Cav1/CACNA1). In Ctenus ornatus (Brazilian spider), this protein is U6-ctenitoxin-Co1a.